The primary structure comprises 309 residues: Metal ABC transporter substrate-binding lipoprotein FimA (309 aa).

The N-terminal stretch at 1–20 is a signal peptide; it reads MKKIASVLALFVALLFGLLA. Cys-21 carries N-palmitoyl cysteine lipidation. Residue Cys-21 is the site of S-diacylglycerol cysteine attachment. Residues His-67, His-139, Glu-205, and Asp-280 each coordinate a divalent metal cation.

It belongs to the bacterial solute-binding protein 9 family. Lipoprotein receptor antigen (Lrai) subfamily.

It is found in the cell membrane. Its function is as follows. Part of an ATP-binding cassette (ABC) transport system involved in metal import. Binds a metal with high affinity and specificity and delivers it to the membrane permease for translocation into the cytoplasm. Also acts as an adhesin which is involved on adherence to extracellular matrix. It is an important factor in pathogenesis and infection. May contribute to the formation and accumulation of dental plaque. In Streptococcus parasanguinis, this protein is Metal ABC transporter substrate-binding lipoprotein FimA (fimA).